Reading from the N-terminus, the 414-residue chain is Probable solanesyl-diphosphate synthase 3, chloroplastic (414 aa).

A compositionally biased stretch (low complexity) spans 1–23; it reads MAAPSSLASSSHLSRRATAAASP. Positions 1–36 are disordered; it reads MAAPSSLASSSHLSRRATAAASPSIPPPSPPPPPQR. Residues 1-72 constitute a chloroplast transit peptide; it reads MAAPSSLASS…KPGVAAVDVP (72 aa). The span at 24 to 35 shows a compositional bias: pro residues; sequence SIPPPSPPPPPQ. Residues Lys-134, Arg-137, and His-172 each contribute to the isopentenyl diphosphate site. 2 residues coordinate Mg(2+): Asp-179 and Asp-183. Arg-188 contributes to the an all-trans-polyprenyl diphosphate binding site. Residue Arg-189 coordinates isopentenyl diphosphate. Residues Lys-265, Thr-266, Gln-303, and Lys-320 each contribute to the an all-trans-polyprenyl diphosphate site.

This sequence belongs to the FPP/GGPP synthase family. As to quaternary structure, homodimer. Mg(2+) serves as cofactor.

The protein localises to the plastid. It is found in the chloroplast. The catalysed reaction is 7 isopentenyl diphosphate + (2E)-geranyl diphosphate = all-trans-nonaprenyl diphosphate + 7 diphosphate. Involved in providing solanesyl diphosphate for plastoquinone-9 (PQ-9) formation. In Oryza sativa subsp. japonica (Rice), this protein is Probable solanesyl-diphosphate synthase 3, chloroplastic.